A 327-amino-acid chain; its full sequence is Poly(ribitol-phosphate) beta-N-acetylglucosaminyltransferase TarP (327 aa).

UDP-N-acetyl-alpha-D-glucosamine contacts are provided by residues Pro-9, Asp-41, Asn-68, Arg-76, and 92–94 (DSD). Asp-94 lines the Mn(2+) pocket. Catalysis depends on Asp-181, which acts as the Proton acceptor.

It belongs to the glycosyltransferase 2 family. As to quaternary structure, homotrimer. It depends on Mn(2+) as a cofactor.

It carries out the reaction 4-O-[(D-ribitylphospho)(n)-di{(2R)-glycerylphospho}]-N-acetyl-beta-D-mannosaminyl-(1-&gt;4)-N-acetyl-alpha-D-glucosaminyl di-trans,octa-cis-undecaprenyl diphosphate + n UDP-N-acetyl-alpha-D-glucosamine = 4-O-([3-N-acetyl-beta-D-glucosaminyl-1-D-ribitylphospho](n)-di{[2R]-1-glycerylphospho})-N-acetyl-beta-D-mannosaminyl-(1-&gt;4)-N-acetyl-alpha-D-glucosaminyl di-trans,octa-cis-undecaprenyl diphosphate + n UDP + n H(+). It participates in cell wall biogenesis; poly(ribitol phosphate) teichoic acid biosynthesis. Functionally, attaches beta-O-GlcNAc (beta-O-N-acetyl-D-glucosamine) residues to the C3 position of poly(RboP)-wall teichoic acids (WTAs). Attenuates immunogenicity of WTA and protects S.aureus against adaptative host defenses by allowing bacteria to evade recognition by preexisting anti-S.aureus antibodies. Also protects the cell from podophage infection. In Staphylococcus aureus (strain N315), this protein is Poly(ribitol-phosphate) beta-N-acetylglucosaminyltransferase TarP.